Reading from the N-terminus, the 538-residue chain is SWM histone demethylase complex subunit phf2 (538 aa).

Disordered stretches follow at residues Arg28 to Gly47, Glu98 to Leu150, and Thr198 to Gly222. The segment covering Glu98–Ser111 has biased composition (basic and acidic residues). The segment at Ala232–Arg288 adopts a PHD-type zinc-finger fold. Over residues Gly367–Ser392 the composition is skewed to polar residues. The segment at Gly367–Val396 is disordered.

Component of the SWM histone demethylase complex composed of at least lsd1, lsd2, phf1 and phf2.

It localises to the nucleus. Its function is as follows. Component of the SWM histone demethylase complex that specifically demethylates H3K9me2, a specific tag for epigenetic transcriptional activation, thereby acting as a corepressor. Has a role in regulating heterochromatin propagation and euchromatic transcription. In Schizosaccharomyces pombe (strain 972 / ATCC 24843) (Fission yeast), this protein is SWM histone demethylase complex subunit phf2 (phf2).